A 190-amino-acid polypeptide reads, in one-letter code: Elongation factor P-like protein (190 aa).

The protein belongs to the elongation factor P family.

The sequence is that of Elongation factor P-like protein from Cronobacter sakazakii (strain ATCC BAA-894) (Enterobacter sakazakii).